The chain runs to 130 residues: Small ribosomal subunit protein uS9 (130 aa).

Belongs to the universal ribosomal protein uS9 family.

The chain is Small ribosomal subunit protein uS9 from Acidovorax ebreus (strain TPSY) (Diaphorobacter sp. (strain TPSY)).